The following is a 325-amino-acid chain: Alkanal monooxygenase beta chain (325 aa).

This sequence belongs to the bacterial luciferase oxidoreductase family. Heterodimer of an alpha and a beta chain.

The enzyme catalyses a long-chain fatty aldehyde + FMNH2 + O2 = a long-chain fatty acid + hnu + FMN + H2O + 2 H(+). Its function is as follows. Light-emitting reaction in luminous bacteria. The specific role of the beta subunit is unknown, but it is absolutely required for bioluminescence activity. The protein is Alkanal monooxygenase beta chain (luxB) of Photobacterium leiognathi.